The sequence spans 1238 residues: Chitin synthase 4 (1238 aa).

2 disordered regions span residues Met1 to Asn93 and Thr132 to Lys190. The segment covering Thr14–Glu34 has biased composition (basic and acidic residues). N-linked (GlcNAc...) asparagine glycosylation is present at Asn50. Composition is skewed to polar residues over residues Ser71 to Asp80 and Val133 to Thr142. Basic and acidic residues predominate over residues Arg175–Lys190. A glycan (N-linked (GlcNAc...) asparagine) is linked at Asn180. Helical transmembrane passes span Ile200–Phe220 and Val235–Phe255. N-linked (GlcNAc...) asparagine glycosylation is found at Asn365, Asn404, and Asn426. A helical membrane pass occupies residues Val487–Ala507. Disordered regions lie at residues Pro548 to Met570 and Tyr582 to Leu606. Polar residues predominate over residues Pro553–Gly562. Residues Asn617, Asn903, and Asn1030 are each glycosylated (N-linked (GlcNAc...) asparagine). Helical transmembrane passes span Ile1062–Ile1082, Val1087–Val1107, and Tyr1115–Ala1135.

This sequence belongs to the chitin synthase family. Class IV subfamily. In terms of processing, maximal activity requires trypsin activation, suggesting a zymogenic nature.

The protein localises to the cell membrane. It catalyses the reaction [(1-&gt;4)-N-acetyl-beta-D-glucosaminyl](n) + UDP-N-acetyl-alpha-D-glucosamine = [(1-&gt;4)-N-acetyl-beta-D-glucosaminyl](n+1) + UDP + H(+). With respect to regulation, activity is stimulated by Mg(2+), and is more inhibited by polyoxin D than by nikkomycin. Its function is as follows. Polymerizes chitin, a structural polymer of the cell wall and septum, by transferring the sugar moiety of UDP-GlcNAc to the non-reducing end of the growing chitin polymer. CHS4 synthesizes a large amount of chitin and appears to play a role in the process of cell separation. CHS4 is particularly well suited for functioning at the higher temperatures associated with its poorly characterized saprophic environment and with human infection. This Exophiala dermatitidis (Black yeast-like fungus) protein is Chitin synthase 4.